The chain runs to 211 residues: Cytidylate kinase (211 aa).

Residue 7–15 participates in ATP binding; it reads GPAASGKGT.

It belongs to the cytidylate kinase family. Type 1 subfamily.

The protein resides in the cytoplasm. It carries out the reaction CMP + ATP = CDP + ADP. The catalysed reaction is dCMP + ATP = dCDP + ADP. The chain is Cytidylate kinase from Rhodopseudomonas palustris (strain BisA53).